The primary structure comprises 360 residues: Phosphoserine aminotransferase (360 aa).

R42 serves as a coordination point for L-glutamate. Residues W102, T152, D171, and Q194 each contribute to the pyridoxal 5'-phosphate site. At K195 the chain carries N6-(pyridoxal phosphate)lysine. A pyridoxal 5'-phosphate-binding site is contributed by 237–238; sequence NT.

This sequence belongs to the class-V pyridoxal-phosphate-dependent aminotransferase family. SerC subfamily. In terms of assembly, homodimer. Requires pyridoxal 5'-phosphate as cofactor.

It is found in the cytoplasm. The enzyme catalyses O-phospho-L-serine + 2-oxoglutarate = 3-phosphooxypyruvate + L-glutamate. The catalysed reaction is 4-(phosphooxy)-L-threonine + 2-oxoglutarate = (R)-3-hydroxy-2-oxo-4-phosphooxybutanoate + L-glutamate. Its pathway is amino-acid biosynthesis; L-serine biosynthesis; L-serine from 3-phospho-D-glycerate: step 2/3. The protein operates within cofactor biosynthesis; pyridoxine 5'-phosphate biosynthesis; pyridoxine 5'-phosphate from D-erythrose 4-phosphate: step 3/5. Functionally, catalyzes the reversible conversion of 3-phosphohydroxypyruvate to phosphoserine and of 3-hydroxy-2-oxo-4-phosphonooxybutanoate to phosphohydroxythreonine. This Coxiella burnetii (strain CbuK_Q154) (Coxiella burnetii (strain Q154)) protein is Phosphoserine aminotransferase.